The following is a 766-amino-acid chain: Serine/threonine-protein kinase tousled-like 1 (766 aa).

At M1 the chain carries N-acetylmethionine. Positions 1–19 (MSVQSSSGSLEGPPSWSQL) are enriched in polar residues. Residues 1-197 (MSVQSSSGSL…SPSPTALAFG (197 aa)) are disordered. The segment covering 20–33 (STSPTPGSAAAARS) has biased composition (low complexity). At T38 the chain carries Phosphothreonine. Residues 43–64 (RPREGAMDELHSLDPRRQELLE) show a composition bias toward basic and acidic residues. Phosphoserine is present on residues S54, S77, and S80. Low complexity predominate over residues 68–85 (TGVASGSTGSTGSCSVGA). The segment covering 87–103 (ASTNNESSNHSFGSLGS) has biased composition (polar residues). Positions 105–121 (SDKESETPEKKQSESSR) are enriched in basic and acidic residues. A phosphoserine mark is found at S134, S159, S174, and S176. Residues 170-192 (SPQNSHSHSTPSSSVRPNSPSPT) are compositionally biased toward low complexity. The stretch at 230-281 (QDLEKKEGRIDDLLRANCDLRRQIDEQQKLLEKYKERLNKCISMSKKLLIEK) forms a coiled coil. The tract at residues 346–383 (LAKRKPPTANNSQAPSTNSEPKQRKNKAVNGAENDPFV) is disordered. Over residues 353–365 (TANNSQAPSTNSE) the composition is skewed to polar residues. Residues 397–445 (HEQEEIFKLRLGHLKKEEAEIQAELERLERVRNLHIRELKRINNEDNSQ) adopt a coiled-coil conformation. The region spanning 456-734 (YLLLHLLGRG…VHQLANDPYL (279 aa)) is the Protein kinase domain. Residues 462-470 (LGRGGFSEV) and K485 contribute to the ATP site. The active-site Proton acceptor is D586. At S743 the chain carries Phosphoserine.

Belongs to the protein kinase superfamily. Ser/Thr protein kinase family. In terms of assembly, heterodimer with TLK2. Mg(2+) is required as a cofactor. Widely expressed. Present in fetal placenta, liver, kidney and pancreas but not heart or skeletal muscle. Also found in adult cell lines. Isoform 3 is ubiquitously expressed in all tissues examined.

Its subcellular location is the nucleus. It carries out the reaction L-seryl-[protein] + ATP = O-phospho-L-seryl-[protein] + ADP + H(+). The enzyme catalyses L-threonyl-[protein] + ATP = O-phospho-L-threonyl-[protein] + ADP + H(+). With respect to regulation, cell-cycle regulated, maximal activity in S-phase. Inactivated by phosphorylation at Ser-743, potentially by CHEK1. Rapidly and transiently inhibited by phosphorylation following the generation of DNA double-stranded breaks during S-phase. This is cell cycle checkpoint and ATM-pathway dependent and appears to regulate processes involved in chromatin assembly. Isoform 3 phosphorylates and enhances the stability of the t-SNARE SNAP23, augmenting its assembly with syntaxin. Isoform 3 protects the cells from the ionizing radiation by facilitating the repair of DSBs. In vitro, phosphorylates histone H3 at 'Ser-10'. The chain is Serine/threonine-protein kinase tousled-like 1 (TLK1) from Homo sapiens (Human).